Reading from the N-terminus, the 132-residue chain is Small ribosomal subunit protein uS8 (132 aa).

It belongs to the universal ribosomal protein uS8 family. As to quaternary structure, part of the 30S ribosomal subunit. Contacts proteins S5 and S12.

Its function is as follows. One of the primary rRNA binding proteins, it binds directly to 16S rRNA central domain where it helps coordinate assembly of the platform of the 30S subunit. In Borrelia hermsii (strain HS1 / DAH), this protein is Small ribosomal subunit protein uS8.